The following is a 119-amino-acid chain: Flagellar transcriptional regulator FlhD (119 aa).

Belongs to the FlhD family. In terms of assembly, homodimer; disulfide-linked. Forms a heterohexamer composed of two FlhC and four FlhD subunits. Each FlhC binds a FlhD dimer, forming a heterotrimer, and a hexamer assembles by dimerization of two heterotrimers.

The protein localises to the cytoplasm. In terms of biological role, functions in complex with FlhC as a master transcriptional regulator that regulates transcription of several flagellar and non-flagellar operons by binding to their promoter region. Activates expression of class 2 flagellar genes, including fliA, which is a flagellum-specific sigma factor that turns on the class 3 genes. Also regulates genes whose products function in a variety of physiological pathways. The protein is Flagellar transcriptional regulator FlhD of Enterobacter sp. (strain 638).